We begin with the raw amino-acid sequence, 97 residues long: Co-chaperonin GroES (97 aa).

It belongs to the GroES chaperonin family. Heptamer of 7 subunits arranged in a ring. Interacts with the chaperonin GroEL.

It localises to the cytoplasm. In terms of biological role, together with the chaperonin GroEL, plays an essential role in assisting protein folding. The GroEL-GroES system forms a nano-cage that allows encapsulation of the non-native substrate proteins and provides a physical environment optimized to promote and accelerate protein folding. GroES binds to the apical surface of the GroEL ring, thereby capping the opening of the GroEL channel. The polypeptide is Co-chaperonin GroES (Pseudomonas putida (Arthrobacter siderocapsulatus)).